Reading from the N-terminus, the 455-residue chain is MTQFHQRGVFYVPDGKRDKAKGGEPRIILLSFLGVLLPSAVLLTLPVFSVSGLSITDALFTATSAISVTGLGVVDTGQHFTLAGKILLMCLMQIGGLGQMTLSAVLLYMFGVRLSLRQQALAKEALGQERQVNLRRLVKKIVTFALVAEAIGFVFLSYRWVPEMGWQTGMFYALFHSISAFNNAGFALFSDSMMSFVNDPLVSFTLAGLFIFGGLGFTVIGDVWRHWRKGFHFLHIHTKIMLIATPLLLLVGTVLFWLLERHNPNTMGSLTTGGQWLAAFFQSASARTAGFNSVDLTQFTQPALLIMIVLMLIGAGSTSTGGGIKVSTFAVAFMATWTFLRQKKHVVMFKRTVNWPTVTKSLAIIVVSGAILTTAMFLLMLTEKASFDKVMFETISAFATVGLTAGLTAELSEPGKYIMIVVMIIGRIGPLTLAYMLARPEPTLIKYPEDTVLTG.

A helical transmembrane segment spans residues 27 to 47 (IILLSFLGVLLPSAVLLTLPV). Residues 54-74 (SITDALFTATSAISVTGLGVV) lie within the membrane without spanning it. 2 consecutive transmembrane segments (helical) span residues 86 to 106 (ILLM…SAVL) and 141 to 161 (IVTF…YRWV). The stretch at 169–189 (GMFYALFHSISAFNNAGFALF) is an intramembrane region. The next 2 helical transmembrane spans lie at 201–221 (LVSF…TVIG) and 240–260 (IMLI…WLLE). An intramembrane segment occupies 291–313 (FNSVDLTQFTQPALLIMIVLMLI). 2 consecutive transmembrane segments (helical) span residues 318-340 (TSTG…WTFL) and 362-382 (LAII…LMLT). The stretch at 390 to 410 (VMFETISAFATVGLTAGLTAE) is an intramembrane region. A helical transmembrane segment spans residues 418–438 (IMIVVMIIGRIGPLTLAYMLA).

This sequence belongs to the TrkH potassium transport family. Ktr (TC 2.A.38.4) subfamily. The uptake system is composed of KtrA and KtrB.

Its subcellular location is the cell inner membrane. Its activity is regulated as follows. K(+) transport is stimulated by Na(+). In terms of biological role, part of the Na(+)-dependent high affinity K(+) uptake system KtrAB. KtrB is the K(+)-translocating subunit. The protein is Ktr system potassium uptake protein B (ktrB) of Vibrio alginolyticus.